Here is a 113-residue protein sequence, read N- to C-terminus: Hydrogenase maturation factor HypA (113 aa).

His2 provides a ligand contact to Ni(2+). Zn(2+) is bound by residues Cys70, Cys73, Cys86, and Cys88.

It belongs to the HypA/HybF family.

Functionally, involved in the maturation of [NiFe] hydrogenases. Required for nickel insertion into the metal center of the hydrogenase. The sequence is that of Hydrogenase maturation factor HypA from Trichormus variabilis (strain ATCC 29413 / PCC 7937) (Anabaena variabilis).